A 715-amino-acid polypeptide reads, in one-letter code: Putative macrophage stimulating 1-like protein (715 aa).

An N-terminal signal peptide occupies residues 1–20 (MAPAPVTLLAPGAASSMSCS). A PAN domain is found at 21–110 (QPGQRSPSND…GRCDLFQEKG (90 aa)). Kringle domains follow at residues 63–156 (GRCG…IKSC), 160–238 (ACVW…LPRC), 252–345 (SCFR…IRRC), and 353–464 (DCYH…LRRC). 12 disulfides stabilise this stretch: Cys127–Cys151, Cys161–Cys238, Cys182–Cys221, Cys210–Cys233, Cys253–Cys345, Cys316–Cys339, Cys354–Cys464, Cys375–Cys447, Cys511–Cys527, Cys606–Cys671, Cys636–Cys650, and Cys661–Cys689. Residues 488–713 (VAGGHPGNSP…FVDWIHKVMR (226 aa)) enclose the Peptidase S1 domain.

This sequence belongs to the peptidase S1 family. Plasminogen subfamily.

Its subcellular location is the secreted. The polypeptide is Putative macrophage stimulating 1-like protein (MST1L) (Homo sapiens (Human)).